A 160-amino-acid polypeptide reads, in one-letter code: MIP18 family protein F45G2.10 (160 aa).

Positions 1 to 32 are disordered; sequence MGQERLDNANPTLFDSKPRHRPVTGTERDESV.

Belongs to the MIP18 family.

May play a role in chromosome segregation through establishment of sister chromatid cohesion. The polypeptide is MIP18 family protein F45G2.10 (Caenorhabditis elegans).